Consider the following 139-residue polypeptide: Small ribosomal subunit protein bS6 (139 aa).

The interval 118 to 139 (SFKGGSKIETPTGSESTDIQEK) is disordered. Positions 126–139 (ETPTGSESTDIQEK) are enriched in polar residues.

This sequence belongs to the bacterial ribosomal protein bS6 family.

Binds together with bS18 to 16S ribosomal RNA. This Borrelia garinii subsp. bavariensis (strain ATCC BAA-2496 / DSM 23469 / PBi) (Borreliella bavariensis) protein is Small ribosomal subunit protein bS6.